The sequence spans 201 residues: 3-isopropylmalate dehydratase small subunit (201 aa).

The protein belongs to the LeuD family. LeuD type 1 subfamily. In terms of assembly, heterodimer of LeuC and LeuD.

It carries out the reaction (2R,3S)-3-isopropylmalate = (2S)-2-isopropylmalate. Its pathway is amino-acid biosynthesis; L-leucine biosynthesis; L-leucine from 3-methyl-2-oxobutanoate: step 2/4. Its function is as follows. Catalyzes the isomerization between 2-isopropylmalate and 3-isopropylmalate, via the formation of 2-isopropylmaleate. This Nitrobacter hamburgensis (strain DSM 10229 / NCIMB 13809 / X14) protein is 3-isopropylmalate dehydratase small subunit.